We begin with the raw amino-acid sequence, 206 residues long: Thymidylate kinase (206 aa).

Position 10–17 (10–17 (GIDGAGKS)) interacts with ATP.

Belongs to the thymidylate kinase family.

It carries out the reaction dTMP + ATP = dTDP + ADP. Phosphorylation of dTMP to form dTDP in both de novo and salvage pathways of dTTP synthesis. The protein is Thymidylate kinase (tmk) of Neisseria meningitidis serogroup B (strain ATCC BAA-335 / MC58).